We begin with the raw amino-acid sequence, 289 residues long: uncharacterized protein (289 aa).

The next 9 helical transmembrane spans lie at 13-32 (INFA…LSGS), 37-59 (LIIS…HLND), 80-99 (IVTE…IFFI), 104-121 (EIAL…WLYS), 141-160 (VFTY…TIFS), 165-183 (VGVV…GFFL), 203-225 (VLSP…FVVI), 235-252 (TSSL…FAIY), and 265-287 (IISS…AIGC).

It is found in the cell membrane. This is an uncharacterized protein from Archaeoglobus fulgidus (strain ATCC 49558 / DSM 4304 / JCM 9628 / NBRC 100126 / VC-16).